The primary structure comprises 1077 residues: ATP-dependent helicase HRQ1 (1077 aa).

The 185-residue stretch at 299–483 (INSLHQGENV…DMFGINEVTL (185 aa)) folds into the Helicase ATP-binding domain. Residue 312-319 (TSTSSGKS) coordinates ATP. The short motif at 423 to 426 (DELH) is the DEAH box element. One can recognise a Helicase C-terminal domain in the interval 521 to 678 (ILVQLILNNV…DLVLDFNNIL (158 aa)).

Belongs to the helicase family. HRQ1 subfamily. In terms of assembly, forms heptamer rings. Interacts with RAD4. Mg(2+) serves as cofactor.

The protein localises to the nucleus. It catalyses the reaction Couples ATP hydrolysis with the unwinding of duplex DNA by translocating in the 3'-5' direction.. It carries out the reaction ATP + H2O = ADP + phosphate + H(+). Its function is as follows. Helicase with 3'-5' helicase activity involved in genome stability. Functions in the RAD4-dependent nucleotide excision repair (NER) pathway and plays a critical role in DNA interstrand cross-link repair. Unwinds relatively long duplex DNA up to 120-bp and requires a long 3'-tail of at least 70 nucleotides for efficient unwinding of duplex DNA. Activity is significantly stimulated by a preexisting fork structure. Shows both processive helicase and DNA strand annealing activities. Affects telomere length by a non-catalytic mechanism, probably through inhibiting telomerase by competing with it for ssDNA binding. The chain is ATP-dependent helicase HRQ1 from Saccharomyces cerevisiae (strain ATCC 204508 / S288c) (Baker's yeast).